A 477-amino-acid polypeptide reads, in one-letter code: Cysteine--tRNA ligase (477 aa).

Cys29 is a Zn(2+) binding site. Residues Pro31–Asn41 carry the 'HIGH' region motif. Zn(2+) is bound by residues Cys209, His234, and Glu238. The 'KMSKS' region signature appears at Lys267–Ser271. Residue Lys270 coordinates ATP.

Belongs to the class-I aminoacyl-tRNA synthetase family. As to quaternary structure, monomer. The cofactor is Zn(2+).

The protein resides in the cytoplasm. The catalysed reaction is tRNA(Cys) + L-cysteine + ATP = L-cysteinyl-tRNA(Cys) + AMP + diphosphate. In Desulfitobacterium hafniense (strain DSM 10664 / DCB-2), this protein is Cysteine--tRNA ligase.